Reading from the N-terminus, the 480-residue chain is Glutamate--tRNA ligase (480 aa).

Positions 8 to 18 (PSPTGPLHIGG) match the 'HIGH' region motif. The 'KMSKS' region signature appears at 249 to 253 (KMSKR). Lys252 lines the ATP pocket.

It belongs to the class-I aminoacyl-tRNA synthetase family. Glutamate--tRNA ligase type 1 subfamily. In terms of assembly, monomer.

The protein localises to the cytoplasm. It catalyses the reaction tRNA(Glu) + L-glutamate + ATP = L-glutamyl-tRNA(Glu) + AMP + diphosphate. Its function is as follows. Catalyzes the attachment of glutamate to tRNA(Glu) in a two-step reaction: glutamate is first activated by ATP to form Glu-AMP and then transferred to the acceptor end of tRNA(Glu). This chain is Glutamate--tRNA ligase, found in Carboxydothermus hydrogenoformans (strain ATCC BAA-161 / DSM 6008 / Z-2901).